The chain runs to 308 residues: UDP-N-acetylenolpyruvoylglucosamine reductase (308 aa).

The 184-residue stretch at 30–213 folds into the FAD-binding PCMH-type domain; sequence RVGGAAEWFI…KATTQSHLDH (184 aa). Residue R176 is part of the active site. S227 (proton donor) is an active-site residue. E297 is an active-site residue.

This sequence belongs to the MurB family. FAD serves as cofactor.

It is found in the cytoplasm. The enzyme catalyses UDP-N-acetyl-alpha-D-muramate + NADP(+) = UDP-N-acetyl-3-O-(1-carboxyvinyl)-alpha-D-glucosamine + NADPH + H(+). It functions in the pathway cell wall biogenesis; peptidoglycan biosynthesis. Its function is as follows. Cell wall formation. The sequence is that of UDP-N-acetylenolpyruvoylglucosamine reductase from Acaryochloris marina (strain MBIC 11017).